A 299-amino-acid polypeptide reads, in one-letter code: Ornithine carbamoyltransferase (299 aa).

Residues 52–55 (STRT), glutamine 79, arginine 103, and 130–133 (HPCQ) contribute to the carbamoyl phosphate site. Residues asparagine 161, aspartate 218, and 222-223 (SM) each bind L-ornithine. Carbamoyl phosphate is bound by residues 258–259 (CL) and arginine 286.

The protein belongs to the aspartate/ornithine carbamoyltransferase superfamily. OTCase family.

The protein localises to the cytoplasm. The catalysed reaction is carbamoyl phosphate + L-ornithine = L-citrulline + phosphate + H(+). It participates in amino-acid biosynthesis; L-arginine biosynthesis; L-arginine from L-ornithine and carbamoyl phosphate: step 1/3. Its function is as follows. Reversibly catalyzes the transfer of the carbamoyl group from carbamoyl phosphate (CP) to the N(epsilon) atom of ornithine (ORN) to produce L-citrulline. The sequence is that of Ornithine carbamoyltransferase from Ruthia magnifica subsp. Calyptogena magnifica.